Here is a 231-residue protein sequence, read N- to C-terminus: MIHAPIDFKGSNFTLLVIHIYDAPIEVIIQAIQDKITQAPQLLKNAPVILNVASLSPECNWINLLKAILSTGLHVVAVSGCNNSTLKNDIIISGLPLITEGQTLQCSSYTTTPIKSTLSINNKTKLIHTPIRSGQQIYAKNSDLVITNNVSAGAELIADGNIHIYGMMRGRALAGASGDSHCQIFCSYLFPELVSIAGQYWIDDQIPAELLGKAGRIYLHCDALSIQPLIF.

The protein belongs to the MinC family. In terms of assembly, interacts with MinD and FtsZ.

Cell division inhibitor that blocks the formation of polar Z ring septums. Rapidly oscillates between the poles of the cell to destabilize FtsZ filaments that have formed before they mature into polar Z rings. Prevents FtsZ polymerization. This chain is Probable septum site-determining protein MinC, found in Baumannia cicadellinicola subsp. Homalodisca coagulata.